Here is a 98-residue protein sequence, read N- to C-terminus: DNA-binding protein Fis (98 aa).

The segment at residues 74–93 (QTRAATMLGINRGTLRKKLK) is a DNA-binding region (H-T-H motif).

This sequence belongs to the transcriptional regulatory Fis family. In terms of assembly, homodimer.

In terms of biological role, activates ribosomal RNA transcription. Plays a direct role in upstream activation of rRNA promoters. This is DNA-binding protein Fis from Glaesserella parasuis serovar 5 (strain SH0165) (Haemophilus parasuis).